The sequence spans 268 residues: Trans-aconitate 2-methyltransferase (268 aa).

The protein belongs to the methyltransferase superfamily. Tam family.

The protein resides in the cytoplasm. It carries out the reaction trans-aconitate + S-adenosyl-L-methionine = (E)-3-(methoxycarbonyl)pent-2-enedioate + S-adenosyl-L-homocysteine. Its function is as follows. Catalyzes the S-adenosylmethionine monomethyl esterification of trans-aconitate. In Delftia acidovorans (strain DSM 14801 / SPH-1), this protein is Trans-aconitate 2-methyltransferase.